A 38-amino-acid chain; its full sequence is Defensin-1 (38 aa).

3 disulfides stabilise this stretch: C4–C25, C11–C33, and C15–C35.

Its subcellular location is the secreted. Functionally, has antibacterial activity against the Gram-positive bacteria L.lactis and S.aureus, and against the Gram-negative bacteria E.coli D32 and V.parahemolyticus. This is Defensin-1 from Crassostrea virginica (Eastern oyster).